Reading from the N-terminus, the 321-residue chain is Serpentine receptor class delta-63 (321 aa).

Helical transmembrane passes span 14–34 (LVYM…YNFT), 41–61 (VKYF…MAFA), 83–103 (YIGP…GIVV), 128–148 (LWTL…IVII), 190–208 (AAMS…GTYW), 240–260 (NFQI…YFMI), and 273–293 (TITV…IYFI).

Belongs to the nematode receptor-like protein srd family.

Its subcellular location is the membrane. This is Serpentine receptor class delta-63 (srd-63) from Caenorhabditis elegans.